A 457-amino-acid chain; its full sequence is UDP-N-acetylglucosamine 1-carboxyvinyltransferase (457 aa).

34–35 (KN) provides a ligand contact to phosphoenolpyruvate. R104 serves as a coordination point for UDP-N-acetyl-alpha-D-glucosamine. Catalysis depends on C128, which acts as the Proton donor. C128 carries the post-translational modification 2-(S-cysteinyl)pyruvic acid O-phosphothioketal. D319 and I341 together coordinate UDP-N-acetyl-alpha-D-glucosamine. Residues 436–457 (INKSKNRSSNSKLKEVSEIRAA) are disordered. Residues 447 to 457 (KLKEVSEIRAA) are compositionally biased toward basic and acidic residues.

It belongs to the EPSP synthase family. MurA subfamily.

It is found in the cytoplasm. The catalysed reaction is phosphoenolpyruvate + UDP-N-acetyl-alpha-D-glucosamine = UDP-N-acetyl-3-O-(1-carboxyvinyl)-alpha-D-glucosamine + phosphate. Its pathway is cell wall biogenesis; peptidoglycan biosynthesis. Cell wall formation. Adds enolpyruvyl to UDP-N-acetylglucosamine. The protein is UDP-N-acetylglucosamine 1-carboxyvinyltransferase of Prochlorococcus marinus subsp. pastoris (strain CCMP1986 / NIES-2087 / MED4).